The primary structure comprises 674 residues: Methionine--tRNA ligase (674 aa).

The short motif at 11-21 is the 'HIGH' region element; sequence PYANGDLHLGH. Positions 142, 145, 155, and 158 each coordinate Zn(2+). A 'KMSKS' region motif is present at residues 330–334; it reads KMSKS. Position 333 (Lys-333) interacts with ATP. Residues 574–674 form the tRNA-binding domain; it reads DFMKVDLRIA…EGAQPGMRVK (101 aa).

Belongs to the class-I aminoacyl-tRNA synthetase family. MetG type 1 subfamily. Homodimer. Zn(2+) is required as a cofactor.

It localises to the cytoplasm. The catalysed reaction is tRNA(Met) + L-methionine + ATP = L-methionyl-tRNA(Met) + AMP + diphosphate. In terms of biological role, is required not only for elongation of protein synthesis but also for the initiation of all mRNA translation through initiator tRNA(fMet) aminoacylation. The sequence is that of Methionine--tRNA ligase from Francisella tularensis subsp. holarctica (strain OSU18).